A 340-amino-acid chain; its full sequence is GTP 3',8-cyclase (340 aa).

A Radical SAM core domain is found at 8–229 (KLGRPIRDLR…IEQHFEISPV (222 aa)). GTP is bound at residue Arg-17. [4Fe-4S] cluster is bound by residues Cys-24 and Cys-28. Tyr-30 is a binding site for S-adenosyl-L-methionine. Cys-31 provides a ligand contact to [4Fe-4S] cluster. Arg-71 is a binding site for GTP. Gly-75 provides a ligand contact to S-adenosyl-L-methionine. Thr-102 is a GTP binding site. Residue Ser-126 participates in S-adenosyl-L-methionine binding. Lys-163 provides a ligand contact to GTP. Residue Met-197 participates in S-adenosyl-L-methionine binding. Residues Cys-261 and Cys-264 each contribute to the [4Fe-4S] cluster site. A GTP-binding site is contributed by 266 to 268 (RAR). Cys-278 contributes to the [4Fe-4S] cluster binding site.

The protein belongs to the radical SAM superfamily. MoaA family. As to quaternary structure, monomer and homodimer. The cofactor is [4Fe-4S] cluster.

It catalyses the reaction GTP + AH2 + S-adenosyl-L-methionine = (8S)-3',8-cyclo-7,8-dihydroguanosine 5'-triphosphate + 5'-deoxyadenosine + L-methionine + A + H(+). Its pathway is cofactor biosynthesis; molybdopterin biosynthesis. Catalyzes the cyclization of GTP to (8S)-3',8-cyclo-7,8-dihydroguanosine 5'-triphosphate. In Staphylococcus epidermidis (strain ATCC 35984 / DSM 28319 / BCRC 17069 / CCUG 31568 / BM 3577 / RP62A), this protein is GTP 3',8-cyclase.